The sequence spans 494 residues: Bifunctional pantoate ligase/cytidylate kinase (494 aa).

A pantoate--beta-alanine ligase region spans residues 1 to 258 (MHFVPTMGGL…CGSTRLIDHA (258 aa)). Residue 7–14 (MGGLHHGH) participates in ATP binding. Catalysis depends on His-14, which acts as the Proton donor. Gln-41 is a (R)-pantoate binding site. Gln-41 lines the beta-alanine pocket. 130-133 (GEKD) contacts ATP. Gln-136 provides a ligand contact to (R)-pantoate. ATP-binding positions include Val-159 and 167-170 (SSSR). A cytidylate kinase region spans residues 259-494 (FLMTRSPLVA…VGEEVWPTPV (236 aa)).

This sequence in the N-terminal section; belongs to the pantothenate synthetase family. In the C-terminal section; belongs to the cytidylate kinase family. Type 1 subfamily.

The protein localises to the cytoplasm. The enzyme catalyses (R)-pantoate + beta-alanine + ATP = (R)-pantothenate + AMP + diphosphate + H(+). It catalyses the reaction CMP + ATP = CDP + ADP. The catalysed reaction is dCMP + ATP = dCDP + ADP. It functions in the pathway cofactor biosynthesis; (R)-pantothenate biosynthesis; (R)-pantothenate from (R)-pantoate and beta-alanine: step 1/1. Its function is as follows. Catalyzes the condensation of pantoate with beta-alanine in an ATP-dependent reaction via a pantoyl-adenylate intermediate. In terms of biological role, catalyzes the transfer of a phosphate group from ATP to either CMP or dCMP to form CDP or dCDP and ADP, respectively. The polypeptide is Bifunctional pantoate ligase/cytidylate kinase (Synechococcus sp. (strain CC9311)).